Here is a 473-residue protein sequence, read N- to C-terminus: tRNA-2-methylthio-N(6)-dimethylallyladenosine synthase (473 aa).

The MTTase N-terminal domain maps to 5–125; sequence RKLHIKSYGC…LPQLLARAKA (121 aa). The [4Fe-4S] cluster site is built by C14, C50, C88, C166, C170, and C173. Positions 152–384 constitute a Radical SAM core domain; the sequence is RARGISAFVT…QNLIDSQQSA (233 aa). One can recognise a TRAM domain in the interval 387–449; sequence RAAVGTTVDV…RYSLLGSLAS (63 aa). Over residues 453–462 the composition is skewed to low complexity; sequence SRASADDAPP. Positions 453 to 473 are disordered; that stretch reads SRASADDAPPVGASSPAIMGV.

The protein belongs to the methylthiotransferase family. MiaB subfamily. As to quaternary structure, monomer. [4Fe-4S] cluster serves as cofactor.

It localises to the cytoplasm. It carries out the reaction N(6)-dimethylallyladenosine(37) in tRNA + (sulfur carrier)-SH + AH2 + 2 S-adenosyl-L-methionine = 2-methylsulfanyl-N(6)-dimethylallyladenosine(37) in tRNA + (sulfur carrier)-H + 5'-deoxyadenosine + L-methionine + A + S-adenosyl-L-homocysteine + 2 H(+). Its function is as follows. Catalyzes the methylthiolation of N6-(dimethylallyl)adenosine (i(6)A), leading to the formation of 2-methylthio-N6-(dimethylallyl)adenosine (ms(2)i(6)A) at position 37 in tRNAs that read codons beginning with uridine. The polypeptide is tRNA-2-methylthio-N(6)-dimethylallyladenosine synthase (Nitrobacter hamburgensis (strain DSM 10229 / NCIMB 13809 / X14)).